The following is a 712-amino-acid chain: Polyribonucleotide nucleotidyltransferase (712 aa).

2 residues coordinate Mg(2+): aspartate 487 and aspartate 493. In terms of domain architecture, KH spans 554 to 613 (PKILTMQINPEKIREVIGPSGKQINKIIDETGVKIDIEQDGTIFISSVNEAMNQKAKQII). Residues 623–691 (GQIYLGKVKR…KQGRVNLSRK (69 aa)) enclose the S1 motif domain.

This sequence belongs to the polyribonucleotide nucleotidyltransferase family. The cofactor is Mg(2+).

The protein resides in the cytoplasm. It catalyses the reaction RNA(n+1) + phosphate = RNA(n) + a ribonucleoside 5'-diphosphate. Involved in mRNA degradation. Catalyzes the phosphorolysis of single-stranded polyribonucleotides processively in the 3'- to 5'-direction. The protein is Polyribonucleotide nucleotidyltransferase of Geobacillus sp. (strain WCH70).